The chain runs to 302 residues: Putative cyclin-D6-1 (302 aa).

This sequence belongs to the cyclin family. Cyclin D subfamily.

This chain is Putative cyclin-D6-1 (CYCD6-1), found in Arabidopsis thaliana (Mouse-ear cress).